Reading from the N-terminus, the 143-residue chain is Zinc-containing ferredoxin (143 aa).

An N-terminal extension region spans residues P13–T60. The Zn(2+) site is built by H31, H34, and H58. 2 4Fe-4S ferredoxin-type domains span residues T60–N89 and K115–P143. Positions 69 and 75 each coordinate [3Fe-4S] cluster. Position 79 (C79) interacts with [4Fe-4S] cluster. Residue D117 coordinates Zn(2+). 3 residues coordinate [4Fe-4S] cluster: C124, C127, and C130. Position 134 (C134) interacts with [3Fe-4S] cluster.

[3Fe-4S] cluster serves as cofactor. The cofactor is [4Fe-4S] cluster. Requires Zn(2+) as cofactor.

Functionally, ferredoxins are iron-sulfur proteins that transfer electrons in a wide variety of metabolic reactions. The protein is Zinc-containing ferredoxin (zfx) of Thermoplasma acidophilum (strain ATCC 25905 / DSM 1728 / JCM 9062 / NBRC 15155 / AMRC-C165).